The primary structure comprises 202 residues: NAD(P)H-quinone oxidoreductase subunit I (202 aa).

2 consecutive 4Fe-4S ferredoxin-type domains span residues 55 to 84 (GRIH…VDWV) and 95 to 124 (KNYS…MTEE). [4Fe-4S] cluster-binding residues include C64, C67, C70, C74, C104, C107, C110, and C114. Positions 168–187 (EYDPHVVPSDRPRAGQRPEE) are enriched in basic and acidic residues. Residues 168 to 202 (EYDPHVVPSDRPRAGQRPEELVDQYKQAAAANEEN) form a disordered region.

Belongs to the complex I 23 kDa subunit family. In terms of assembly, NDH-1 is composed of at least 11 different subunits. The cofactor is [4Fe-4S] cluster.

The protein resides in the cellular thylakoid membrane. It carries out the reaction a plastoquinone + NADH + (n+1) H(+)(in) = a plastoquinol + NAD(+) + n H(+)(out). It catalyses the reaction a plastoquinone + NADPH + (n+1) H(+)(in) = a plastoquinol + NADP(+) + n H(+)(out). In terms of biological role, NDH-1 shuttles electrons from an unknown electron donor, via FMN and iron-sulfur (Fe-S) centers, to quinones in the respiratory and/or the photosynthetic chain. The immediate electron acceptor for the enzyme in this species is believed to be plastoquinone. Couples the redox reaction to proton translocation, and thus conserves the redox energy in a proton gradient. This Synechococcus elongatus (strain ATCC 33912 / PCC 7942 / FACHB-805) (Anacystis nidulans R2) protein is NAD(P)H-quinone oxidoreductase subunit I.